We begin with the raw amino-acid sequence, 260 residues long: Proteasome subunit alpha type-1 (260 aa).

The interval 240-260 is disordered; the sequence is PRTTGGAAAAAAPGGAEPMQM. A compositionally biased stretch (low complexity) spans 244–260; that stretch reads GGAAAAAAPGGAEPMQM.

Belongs to the peptidase T1A family. In terms of assembly, the 26S proteasome consists of a 20S proteasome core and two 19S regulatory subunits. The 20S proteasome core is composed of 28 subunits that are arranged in four stacked rings, resulting in a barrel-shaped structure. The two end rings are each formed by seven alpha subunits, and the two central rings are each formed by seven beta subunits. The catalytic chamber with the active sites is on the inside of the barrel.

The protein resides in the cytoplasm. It is found in the nucleus. Functionally, the proteasome is a multicatalytic proteinase complex which is characterized by its ability to cleave peptides with Arg, Phe, Tyr, Leu, and Glu adjacent to the leaving group at neutral or slightly basic pH. The proteasome has an ATP-dependent proteolytic activity. The chain is Proteasome subunit alpha type-1 (pas-6) from Caenorhabditis elegans.